We begin with the raw amino-acid sequence, 320 residues long: Aspartate carbamoyltransferase catalytic subunit (320 aa).

Residues Arg68 and Thr69 each contribute to the carbamoyl phosphate site. Residue Lys96 participates in L-aspartate binding. The carbamoyl phosphate site is built by Arg118, His148, and Gln151. Arg181 and Arg236 together coordinate L-aspartate. Residues Gly277 and Pro278 each coordinate carbamoyl phosphate.

This sequence belongs to the aspartate/ornithine carbamoyltransferase superfamily. ATCase family. As to quaternary structure, heterododecamer (2C3:3R2) of six catalytic PyrB chains organized as two trimers (C3), and six regulatory PyrI chains organized as three dimers (R2).

The catalysed reaction is carbamoyl phosphate + L-aspartate = N-carbamoyl-L-aspartate + phosphate + H(+). The protein operates within pyrimidine metabolism; UMP biosynthesis via de novo pathway; (S)-dihydroorotate from bicarbonate: step 2/3. Functionally, catalyzes the condensation of carbamoyl phosphate and aspartate to form carbamoyl aspartate and inorganic phosphate, the committed step in the de novo pyrimidine nucleotide biosynthesis pathway. This is Aspartate carbamoyltransferase catalytic subunit from Leptothrix cholodnii (strain ATCC 51168 / LMG 8142 / SP-6) (Leptothrix discophora (strain SP-6)).